The primary structure comprises 100 residues: Urease subunit gamma (100 aa).

It belongs to the urease gamma subunit family. In terms of assembly, heterotrimer of UreA (gamma), UreB (beta) and UreC (alpha) subunits. Three heterotrimers associate to form the active enzyme.

The protein localises to the cytoplasm. The enzyme catalyses urea + 2 H2O + H(+) = hydrogencarbonate + 2 NH4(+). The protein operates within nitrogen metabolism; urea degradation; CO(2) and NH(3) from urea (urease route): step 1/1. The protein is Urease subunit gamma of Yersinia aldovae.